The following is a 203-amino-acid chain: Pectinesterase inhibitor 12 (203 aa).

An N-terminal signal peptide occupies residues Met-1–Ala-26. Cystine bridges form between Cys-32–Cys-47 and Cys-100–Cys-140.

Belongs to the PMEI family.

The protein resides in the secreted. The protein localises to the extracellular space. It is found in the apoplast. Its function is as follows. Pectin methylesterase (PME) inhibitor that inhibits PME in vitro. This is Pectinesterase inhibitor 12 from Oryza sativa subsp. japonica (Rice).